The primary structure comprises 368 residues: 3-dehydroquinate synthase (368 aa).

NAD(+) is bound by residues 112–116, 136–137, Lys-149, and Lys-158; these read GVIGD and TT. 3 residues coordinate Zn(2+): Glu-191, His-256, and His-273.

It belongs to the sugar phosphate cyclases superfamily. Dehydroquinate synthase family. Co(2+) is required as a cofactor. Zn(2+) serves as cofactor. The cofactor is NAD(+).

The protein localises to the cytoplasm. The enzyme catalyses 7-phospho-2-dehydro-3-deoxy-D-arabino-heptonate = 3-dehydroquinate + phosphate. The protein operates within metabolic intermediate biosynthesis; chorismate biosynthesis; chorismate from D-erythrose 4-phosphate and phosphoenolpyruvate: step 2/7. Functionally, catalyzes the conversion of 3-deoxy-D-arabino-heptulosonate 7-phosphate (DAHP) to dehydroquinate (DHQ). The chain is 3-dehydroquinate synthase from Prochlorococcus marinus (strain NATL1A).